The chain runs to 172 residues: Putative phosphoesterase Bcer98_0945 (172 aa).

His-34 functions as the Proton donor in the catalytic mechanism. Short sequence motifs (HXTX) lie at residues 34 to 37 (HITL) and 115 to 118 (HLTI). The Proton acceptor role is filled by His-115.

Belongs to the 2H phosphoesterase superfamily. YjcG family.

The sequence is that of Putative phosphoesterase Bcer98_0945 from Bacillus cytotoxicus (strain DSM 22905 / CIP 110041 / 391-98 / NVH 391-98).